The chain runs to 757 residues: Probable ubiquitin carboxyl-terminal hydrolase MINDY-4 (757 aa).

Disordered regions lie at residues 152-173 (FVSSKRPPHKSKPMQTVPGETP) and 190-334 (SLDV…LPGG). Over residues 190–201 (SLDVKRMGENSR) the composition is skewed to basic and acidic residues. Phosphoserine occurs at positions 219 and 223. The span at 232 to 242 (SSPSSSSTQPQ) shows a compositional bias: low complexity. Polar residues predominate over residues 254–277 (CTQQDILASSNSSPSRTSLGQLSE). Position 289 is a phosphoserine (S289). The span at 299-310 (PPWDRARPRDPS) shows a compositional bias: basic and acidic residues. Residue C456 is the Nucleophile of the active site. Residue H677 is the Proton acceptor of the active site.

Belongs to the MINDY deubiquitinase family. FAM188 subfamily.

It catalyses the reaction Thiol-dependent hydrolysis of ester, thioester, amide, peptide and isopeptide bonds formed by the C-terminal Gly of ubiquitin (a 76-residue protein attached to proteins as an intracellular targeting signal).. In terms of biological role, probable hydrolase that can remove 'Lys-48'-linked conjugated ubiquitin from proteins. This is Probable ubiquitin carboxyl-terminal hydrolase MINDY-4 from Homo sapiens (Human).